A 278-amino-acid polypeptide reads, in one-letter code: 4-deoxy-L-threo-5-hexosulose-uronate ketol-isomerase (278 aa).

Residues His-196, His-198, Glu-203, and His-245 each contribute to the Zn(2+) site.

It belongs to the KduI family. As to quaternary structure, homohexamer. Requires Zn(2+) as cofactor.

The catalysed reaction is 5-dehydro-4-deoxy-D-glucuronate = 3-deoxy-D-glycero-2,5-hexodiulosonate. Its pathway is glycan metabolism; pectin degradation; 2-dehydro-3-deoxy-D-gluconate from pectin: step 4/5. In terms of biological role, catalyzes the isomerization of 5-dehydro-4-deoxy-D-glucuronate to 3-deoxy-D-glycero-2,5-hexodiulosonate. This is 4-deoxy-L-threo-5-hexosulose-uronate ketol-isomerase from Escherichia coli O127:H6 (strain E2348/69 / EPEC).